The primary structure comprises 95 residues: Large ribosomal subunit protein uL23 (95 aa).

Belongs to the universal ribosomal protein uL23 family. Part of the 50S ribosomal subunit. Contacts protein L29, and trigger factor when it is bound to the ribosome.

Its function is as follows. One of the early assembly proteins it binds 23S rRNA. One of the proteins that surrounds the polypeptide exit tunnel on the outside of the ribosome. Forms the main docking site for trigger factor binding to the ribosome. The protein is Large ribosomal subunit protein uL23 of Coxiella burnetii (strain RSA 493 / Nine Mile phase I).